Consider the following 344-residue polypeptide: Uroporphyrinogen decarboxylase (344 aa).

Residues 26-30 (RQAGR), Asp-76, Tyr-151, Ser-206, and His-321 contribute to the substrate site.

Belongs to the uroporphyrinogen decarboxylase family. As to quaternary structure, homodimer.

It is found in the cytoplasm. It carries out the reaction uroporphyrinogen III + 4 H(+) = coproporphyrinogen III + 4 CO2. It functions in the pathway porphyrin-containing compound metabolism; protoporphyrin-IX biosynthesis; coproporphyrinogen-III from 5-aminolevulinate: step 4/4. Functionally, catalyzes the decarboxylation of four acetate groups of uroporphyrinogen-III to yield coproporphyrinogen-III. In Sinorhizobium fredii (strain NBRC 101917 / NGR234), this protein is Uroporphyrinogen decarboxylase.